Reading from the N-terminus, the 302-residue chain is Zinc finger protein-like 1 homolog (302 aa).

A B box-type; degenerate zinc finger spans residues 1 to 43 (MGLCKCPKRLVTNQFCFEHRVNVCEHCMVQSHPKCIVQSYLQW). The RING-type; atypical zinc finger occupies 53 to 101 (CNLCGTSLEQGECVRLVCYHVFHWDCLNARQAALPANTAPRGHQCPGCS). The disordered stretch occupies residues 168–233 (IHSGGERERG…RDDNKYQRRT (66 aa)). Positions 198 to 208 (PPSSGDFNASS) are enriched in polar residues. Residue Ser-217 is modified to Phosphoserine. A helical transmembrane segment spans residues 258–278 (WFLVLSGILAFVMFIYLLAWM).

Belongs to the ZFPL1 family.

It localises to the membrane. The chain is Zinc finger protein-like 1 homolog from Drosophila pseudoobscura pseudoobscura (Fruit fly).